Reading from the N-terminus, the 243-residue chain is 7-cyano-7-deazaguanine synthase (243 aa).

18–28 (FSGGQDSATCL) is a binding site for ATP. Zn(2+) contacts are provided by C206, C221, C224, and C227.

It belongs to the QueC family. Requires Zn(2+) as cofactor.

The enzyme catalyses 7-carboxy-7-deazaguanine + NH4(+) + ATP = 7-cyano-7-deazaguanine + ADP + phosphate + H2O + H(+). It participates in purine metabolism; 7-cyano-7-deazaguanine biosynthesis. In terms of biological role, catalyzes the ATP-dependent conversion of 7-carboxy-7-deazaguanine (CDG) to 7-cyano-7-deazaguanine (preQ(0)). The sequence is that of 7-cyano-7-deazaguanine synthase from Methylorubrum extorquens (strain CM4 / NCIMB 13688) (Methylobacterium extorquens).